The chain runs to 363 residues: Nucleoporin SEH1 (363 aa).

WD repeat units follow at residues Ala-15–Arg-54, Cys-60–Asp-101, Gln-108–Glu-149, Arg-158–Glu-206, Asp-223–Leu-264, and Gly-287–Lys-326.

Belongs to the WD repeat SEC13 family. In terms of assembly, component of the nuclear pore complex (NPC). Probably part of the GATOR complex.

It is found in the nucleus. It localises to the nuclear pore complex. Its subcellular location is the lysosome membrane. The protein localises to the nucleus envelope. Functionally, probable component of the nuclear pore complex (NPC) which is involved in the trafficking of macromolecules between the cytoplasm and nucleus. As a component of the GATOR complex may function in the amino acid-sensing branch of the TORC1 signaling pathway. The chain is Nucleoporin SEH1 from Caenorhabditis elegans.